The chain runs to 343 residues: Plasminogen (343 aa).

Kringle domains are found at residues Ala-1–Leu-17 and Ala-41–Ala-120. The interval Ala-1 to Cys-140 is plasmin heavy chain A. Intrachain disulfides connect Cys-15–Cys-94, Cys-36–Cys-77, and Cys-65–Cys-89. The Peptidase S1 domain occupies Val-114–Arg-341. Ser-130 is subject to Phosphoserine. A disulfide bridge connects residues Cys-140 and Cys-156. The tract at residues Gly-141–Tyr-343 is plasmin light chain B. Active-site charge relay system residues include His-155 and Asp-198. Ser-221 carries the post-translational modification Phosphoserine. 3 disulfides stabilise this stretch: Cys-232–Cys-299, Cys-262–Cys-278, and Cys-289–Cys-317. The Charge relay system role is filled by Ser-293.

Belongs to the peptidase S1 family. Plasminogen subfamily. Interacts with CSPG4 and AMOT. Interacts (via the Kringle domains) with HRG; the interaction tethers PLG to the cell surface and enhances its activation. Interacts (via Kringle 4 domain) with ADA; the interaction stimulates PLG activation when in complex with DPP4. Angiostatin: Interacts with ATP5F1A; the interaction inhibits most of the angiogenic effects of angiostatin.

It is found in the secreted. It catalyses the reaction Preferential cleavage: Lys-|-Xaa &gt; Arg-|-Xaa, higher selectivity than trypsin. Converts fibrin into soluble products.. Its activity is regulated as follows. Converted into plasmin by plasminogen activators, both plasminogen and its activator being bound to fibrin. Cannot be activated with streptokinase. Its function is as follows. Plasmin dissolves the fibrin of blood clots and acts as a proteolytic factor in a variety of other processes including embryonic development, tissue remodeling, tumor invasion, and inflammation. In ovulation, weakens the walls of the Graafian follicle. It activates the urokinase-type plasminogen activator, collagenases and several complement zymogens, such as C1, C4 and C5. Cleavage of fibronectin and laminin leads to cell detachment and apoptosis. Also cleaves fibrin, thrombospondin and von Willebrand factor. Its role in tissue remodeling and tumor invasion may be modulated by CSPG4. Binds to cells. The polypeptide is Plasminogen (PLG) (Ovis aries (Sheep)).